The chain runs to 395 residues: Xylose isomerase (395 aa).

Catalysis depends on residues histidine 54 and aspartate 57. Mg(2+)-binding residues include glutamate 181, glutamate 217, histidine 220, aspartate 245, aspartate 255, aspartate 257, and aspartate 293.

The protein belongs to the xylose isomerase family. In terms of assembly, homotetramer. Mg(2+) serves as cofactor.

The protein localises to the cytoplasm. The enzyme catalyses alpha-D-xylose = alpha-D-xylulofuranose. The polypeptide is Xylose isomerase (Arthrobacter sp. (strain FB24)).